The primary structure comprises 354 residues: Guanine nucleotide-binding protein G(i) subunit alpha (354 aa).

Residue G2 is the site of N-myristoyl glycine attachment. C3 is lipidated: S-palmitoyl cysteine. The G-alpha domain occupies R32–F354. The tract at residues K35–T48 is G1 motif. GTP contacts are provided by residues G40–S47, L175–T181, D200–Q204, N269–D272, and A326. Mg(2+) is bound by residues S47 and T181. The interval D173 to T181 is G2 motif. The tract at residues F196–R205 is G3 motif. The segment at I265 to D272 is G4 motif. Residues T324 to T329 are G5 motif.

This sequence belongs to the G-alpha family. G(i/o/t/z) subfamily. As to quaternary structure, g proteins are composed of 3 units; alpha, beta and gamma. The alpha chain contains the guanine nucleotide binding site.

Guanine nucleotide-binding proteins (G proteins) are involved as modulators or transducers in various transmembrane signaling systems. The G(i) proteins are involved in hormonal regulation of adenylate cyclase: they inhibit the cyclase in response to beta-adrenergic stimuli. The polypeptide is Guanine nucleotide-binding protein G(i) subunit alpha (Lymnaea stagnalis (Great pond snail)).